A 146-amino-acid chain; its full sequence is Large ribosomal subunit protein uL13 (146 aa).

This sequence belongs to the universal ribosomal protein uL13 family. In terms of assembly, part of the 50S ribosomal subunit.

Its function is as follows. This protein is one of the early assembly proteins of the 50S ribosomal subunit, although it is not seen to bind rRNA by itself. It is important during the early stages of 50S assembly. This Mycoplasma genitalium (strain ATCC 33530 / DSM 19775 / NCTC 10195 / G37) (Mycoplasmoides genitalium) protein is Large ribosomal subunit protein uL13.